Reading from the N-terminus, the 273-residue chain is Chondrolectin (273 aa).

Positions 1 to 21 (MSRVVSLLLGAALLCGHGAFC) are cleaved as a signal peptide. At 22-216 (RRVVSGQKVC…VVTEAGIIPN (195 aa)) the chain is on the extracellular side. The C-type lectin domain maps to 35–179 (FKHPCYKMAY…CNMKHNYICK (145 aa)). Intrachain disulfides connect cysteine 61/cysteine 178 and cysteine 144/cysteine 170. Asparagine 86 is a glycosylation site (N-linked (GlcNAc...) asparagine). A helical transmembrane segment spans residues 217–237 (LIYVVIPTIPLLLLILVAFGT). Residues 238–273 (CCFQMLHKSKGRTKTSPNQSTLWISKSTRKESGMEV) are Cytoplasmic-facing. The segment at 248–273 (GRTKTSPNQSTLWISKSTRKESGMEV) is disordered. A compositionally biased stretch (polar residues) spans 251 to 263 (KTSPNQSTLWISK).

In terms of assembly, interacts with RABGGTB. Post-translationally, N-glycosylated. As to expression, found in spleen, testis, prostate and fetal liver. Expression limited to vascular muscle of testis, smooth muscle of prostate stroma, heart muscle, skeletal muscle, crypts of small intestine, and red pulp of spleen. B lymphocytes express isoform 2 only; peripheral blood T lymphocytes express isoform 3 only; granulocytes and monocytes express neither isoform 2 nor isoform 3. During development of T lymphocytes, bone marrow progenitor cells express isoform 2 only; thymocytes at different stages of maturation express predominantly isoform 2 and weakly isoform 3, and mature thymocytes express only isoform 2.

It is found in the cytoplasm. The protein resides in the membrane. The protein localises to the endoplasmic reticulum. Its subcellular location is the endoplasmic reticulum membrane. Its function is as follows. May play a role in the development of the nervous system such as in neurite outgrowth and elongation. May be involved in motor axon growth and guidance. The chain is Chondrolectin (CHODL) from Homo sapiens (Human).